We begin with the raw amino-acid sequence, 429 residues long: Probable M18 family aminopeptidase 2 (429 aa).

Residues His-82, His-156, and His-401 each contribute to the Zn(2+) site.

The protein belongs to the peptidase M18 family. It depends on Zn(2+) as a cofactor.

This Ectopseudomonas mendocina (strain ymp) (Pseudomonas mendocina) protein is Probable M18 family aminopeptidase 2.